A 200-amino-acid chain; its full sequence is 6,7-dimethyl-8-ribityllumazine synthase (200 aa).

5-amino-6-(D-ribitylamino)uracil-binding positions include Trp25, 59 to 61 (SWE), and 119 to 121 (VLI). 124–125 (ET) contacts (2S)-2-hydroxy-3-oxobutyl phosphate. The active-site Proton donor is the His127. Phe152 is a binding site for 5-amino-6-(D-ribitylamino)uracil. Arg166 is a (2S)-2-hydroxy-3-oxobutyl phosphate binding site.

The protein belongs to the DMRL synthase family. Homopentamer.

The enzyme catalyses (2S)-2-hydroxy-3-oxobutyl phosphate + 5-amino-6-(D-ribitylamino)uracil = 6,7-dimethyl-8-(1-D-ribityl)lumazine + phosphate + 2 H2O + H(+). Its pathway is cofactor biosynthesis; riboflavin biosynthesis; riboflavin from 2-hydroxy-3-oxobutyl phosphate and 5-amino-6-(D-ribitylamino)uracil: step 1/2. Functionally, catalyzes the formation of 6,7-dimethyl-8-ribityllumazine by condensation of 5-amino-6-(D-ribitylamino)uracil with 3,4-dihydroxy-2-butanone 4-phosphate. This is the penultimate step in the biosynthesis of riboflavin. This Pyricularia oryzae (strain 70-15 / ATCC MYA-4617 / FGSC 8958) (Rice blast fungus) protein is 6,7-dimethyl-8-ribityllumazine synthase.